The chain runs to 627 residues: BEL1-like homeodomain protein 4 (627 aa).

The segment at 206 to 225 (SSQHHHHQVVGHFGSSSSSP) is disordered. A compositionally biased stretch (low complexity) spans 215–225 (VGHFGSSSSSP). Residues 241-257 (SKYTKPAQELLEEFCSV) are SR/KY domain. Residues 263–307 (KKNKLSRNNSNPNTTGGGGGGGSSSSAGTANDSPPLSPADRIEHQ) are disordered. The interval 302–373 (DRIEHQRRKV…CLKDAVAVQL (72 aa)) is BELL domain. A DNA-binding region (homeobox) is located at residues 424-486 (AWRPQRGLPE…NARVRLWKPM (63 aa)). Residues 494–530 (EAKEREEAEEENENQQQQRRQQQTNNNDTKPNNNENN) form a disordered region. Over residues 507-530 (NQQQQRRQQQTNNNDTKPNNNENN) the composition is skewed to low complexity.

Belongs to the TALE/BELL homeobox family. May form heterodimeric complexes with TALE/KNOX proteins. Interacts with OFP1, OFP2 and OFP5. Interacts with KNATM, isoform KNATM-B. In terms of tissue distribution, expressed in lateral organs.

It is found in the nucleus. Its function is as follows. Transcription factor that establishes leaf shape by repressing growth in specific subdomains of the leaf. Negatively regulates knox homeobox gene KNAT1/BP expression. The protein is BEL1-like homeodomain protein 4 (BLH4) of Arabidopsis thaliana (Mouse-ear cress).